A 742-amino-acid polypeptide reads, in one-letter code: Alginate lyase (742 aa).

The N-terminal stretch at 1–26 (MRLQPLFVSLALAAPCALLPTASLSA) is a signal peptide. Substrate-binding positions include Arg143, 153–156 (QVLN), Gln204, His208, and 263–266 (YYQR). Tyr264 functions as the Proton donor in the catalytic mechanism. His418 functions as the Proton acceptor in the catalytic mechanism. Residues His420 and Asp438 each coordinate Zn(2+). Arg443 provides a ligand contact to substrate. His469 serves as a coordination point for Zn(2+). Glu669 is a substrate binding site.

The protein belongs to the polysaccharide lyase 17 family. In terms of assembly, homodimer. Requires Zn(2+) as cofactor.

The protein resides in the periplasm. The catalysed reaction is Cleavage of 4-deoxy-alpha-L-erythro-hex-4-enopyranuronoside oligosaccharides into 4-deoxy-alpha-L-erythro-hex-4-enopyranuronate monosaccharides.. In terms of biological role, polysaccharide lyase that catalyzes the depolymerization of alginate via a beta-elimination mechanism, cleaving the beta-1,4 glycosidic bond between two adjacent sugar residues. Acts specifically on alginate and each of its block structures, with highest activity toward poly-beta-D-mannuronate (poly-ManA). Shows an exolytic mode of action, producing unsaturated monomers. Displays a very low activity against poly-beta-D-glucuronate (poly-GlcA), and is not active on poly-alpha-D-galacturonate, hyaluronan, heparin, heparan sulfate and chondroitin sulfate. The protein is Alginate lyase of Stenotrophomonas maltophilia (strain K279a).